A 223-amino-acid chain; its full sequence is Small ribosomal subunit protein uS3 (223 aa).

The KH type-2 domain maps to 39-117 (IREHLRKKPS…RPELNAKLVA (79 aa)).

Belongs to the universal ribosomal protein uS3 family. Part of the 30S ribosomal subunit. Forms a tight complex with proteins S10 and S14.

Functionally, binds the lower part of the 30S subunit head. Binds mRNA in the 70S ribosome, positioning it for translation. The sequence is that of Small ribosomal subunit protein uS3 from Chlamydia caviae (strain ATCC VR-813 / DSM 19441 / 03DC25 / GPIC) (Chlamydophila caviae).